Here is a 237-residue protein sequence, read N- to C-terminus: MKSFLRKPKFWLLLLGGLSTSSIILSACATPSNSALQAVFKPTSNQFFNGEHGTIQSALNTALRDPETNKKFVAAPLLKALEAWYENNQDKNITQFLKDTKTNVDNQYKTVVDKVVSAPRNKSLFVQQDLLDSSGGSEATWKARKLFEQLISDFASRVFQKNYLSYKENGKVSAGPFLYDTISKNSNWQNIVFDAVNFPETNDDFFAKIQSEVFDQWAEYTDPTIISSVTLKYSAPN.

The first 27 residues, 1 to 27 (MKSFLRKPKFWLLLLGGLSTSSIILSA), serve as a signal peptide directing secretion. Cys28 carries the N-palmitoyl cysteine lipid modification. Residue Cys28 is the site of S-diacylglycerol cysteine attachment.

Belongs to the MG307/MG309/MG338 family.

The protein resides in the membrane. This is an uncharacterized protein from Mycoplasma pneumoniae (strain ATCC 29342 / M129 / Subtype 1) (Mycoplasmoides pneumoniae).